We begin with the raw amino-acid sequence, 41 residues long: Diuretic hormone 1 (41 aa).

Ile41 is subject to Isoleucine amide.

Its subcellular location is the secreted. Functionally, regulation of fluid secretion. May stimulate primary urine secretion by Malpighian tubules and causes a dose-dependent stimulation of cAMP levels in the tubules. The protein is Diuretic hormone 1 of Hyles lineata (White-lined sphinx moth).